The following is a 116-amino-acid chain: Dynein light chain Tctex-type 3 (116 aa).

The residue at position 4 (Y4) is a 3'-nitrotyrosine.

Belongs to the dynein light chain Tctex-type family. As to quaternary structure, homodimer. The cytoplasmic dynein 1 complex consists of two catalytic heavy chains (HCs) and a number of non-catalytic subunits presented by intermediate chains (ICs), light intermediate chains (LICs) and light chains (LCs); the composition seems to vary in respect to the IC, LIC and LC composition. The heavy chain homodimer serves as a scaffold for the probable homodimeric assembly of the respective non-catalytic subunits. The ICs and LICs bind directly to the HC dimer and the LCs assemble on the IC dimer. DYNLT1 and DYNLT3 compete for association with dynein IC (DYNC1I1 or DYNC1I2). Self-associates. Interacts with DYNC1I1 and DYNC1I2. Interacts with BUB3. Interacts with SATB1 in nucleus to form complex with matrix attachment regions (MARs) of DNA.

Its subcellular location is the nucleus. The protein resides in the cytoplasm. The protein localises to the cytoskeleton. It is found in the chromosome. It localises to the centromere. Its subcellular location is the kinetochore. Acts as one of several non-catalytic accessory components of the cytoplasmic dynein 1 complex that are thought to be involved in linking dynein to cargos and to adapter proteins that regulate dynein function. Cytoplasmic dynein 1 acts as a motor for the intracellular retrograde motility of vesicles and organelles along microtubules. Probably binds BUB3 as part of transport cargo. Required for the efficient progression through mitosis. The polypeptide is Dynein light chain Tctex-type 3 (DYNLT3) (Canis lupus familiaris (Dog)).